The following is a 432-amino-acid chain: 3-phosphoshikimate 1-carboxyvinyltransferase (432 aa).

3 residues coordinate 3-phosphoshikimate: Lys-22, Ser-23, and Arg-27. Phosphoenolpyruvate is bound at residue Lys-22. Phosphoenolpyruvate-binding residues include Gly-96 and Arg-127. 3-phosphoshikimate-binding residues include Ser-173, Ser-174, Gln-175, Ser-201, Asp-316, Asn-339, and Lys-343. Residue Gln-175 coordinates phosphoenolpyruvate. Asp-316 (proton acceptor) is an active-site residue. Positions 347, 391, and 416 each coordinate phosphoenolpyruvate.

It belongs to the EPSP synthase family. As to quaternary structure, monomer.

The protein resides in the cytoplasm. It carries out the reaction 3-phosphoshikimate + phosphoenolpyruvate = 5-O-(1-carboxyvinyl)-3-phosphoshikimate + phosphate. It participates in metabolic intermediate biosynthesis; chorismate biosynthesis; chorismate from D-erythrose 4-phosphate and phosphoenolpyruvate: step 6/7. Functionally, catalyzes the transfer of the enolpyruvyl moiety of phosphoenolpyruvate (PEP) to the 5-hydroxyl of shikimate-3-phosphate (S3P) to produce enolpyruvyl shikimate-3-phosphate and inorganic phosphate. In Actinobacillus pleuropneumoniae serotype 7 (strain AP76), this protein is 3-phosphoshikimate 1-carboxyvinyltransferase.